Consider the following 395-residue polypeptide: MSWKYDVVVVGAGIAGPIVARNVARAGFSVLLIDKKWAIGTPKQCAEGISIKVFEKYDIPYDKRFINREIYGAKLYSPSGYELEMRYKDVSGVILERKVFDKMLAYYAAKAGADVLARTEALDVIRKDGKVVGIKAKHEDEPIEIYADVIVAADGVESTIARKAGINTYAPPHEFDSSYEYEMLIEGFDPDLIHLWFGNEIAPRGYVWVFPKDEDRANVGIGINSDNPQTAKYYLDKWLKENNIPAKKLLEINVGVVPVGGFVKELVKNNVLVVGDAARQVNPMHGGGMAEAMEAGTIASKWIVKALEEENLSLLQNYTKEWWETDGKRLEKVLKVRRVTEKLTDEDLDLFIQVLSGADAEKIAGGDYGEVIKALLKHPKVLMSKRRLSLLKSLL.

The FAD site is built by Ala-15, Asp-34, Cys-45, Ala-46, Gly-48, Arg-97, Ala-121, Asp-276, and Gly-288. A 2,3-bis-O-(geranylgeranyl)-sn-glycerol 1-phospholipid-binding residues include Arg-329 and Gly-365.

It belongs to the geranylgeranyl reductase family. DGGGPL reductase subfamily. Requires FAD as cofactor.

The catalysed reaction is a 2,3-bis-O-phytanyl-sn-glycerol 1-phospholipid + 8 A = a 2,3-bis-O-(geranylgeranyl)-sn-glycerol 1-phospholipid + 8 AH2. The enzyme catalyses 2,3-bis-O-(phytanyl)-sn-glycerol 1-phosphate + 8 A = 2,3-bis-O-(geranylgeranyl)-sn-glycerol 1-phosphate + 8 AH2. It catalyses the reaction CDP-2,3-bis-O-(geranylgeranyl)-sn-glycerol + 8 AH2 = CDP-2,3-bis-O-(phytanyl)-sn-glycerol + 8 A. It carries out the reaction archaetidylserine + 8 AH2 = 2,3-bis-O-phytanyl-sn-glycero-3-phospho-L-serine + 8 A. The protein operates within membrane lipid metabolism; glycerophospholipid metabolism. Is involved in the reduction of 2,3-digeranylgeranylglycerophospholipids (unsaturated archaeols) into 2,3-diphytanylglycerophospholipids (saturated archaeols) in the biosynthesis of archaeal membrane lipids. Catalyzes the formation of archaetidic acid (2,3-di-O-phytanyl-sn-glyceryl phosphate) from 2,3-di-O-geranylgeranylglyceryl phosphate (DGGGP) via the hydrogenation of each double bond of the isoprenoid chains. Is also probably able to reduce double bonds of geranyl groups in CDP-2,3-bis-O-(geranylgeranyl)-sn-glycerol and archaetidylserine, thus acting at various stages in the biosynthesis of archaeal membrane lipids. In Thermococcus gammatolerans (strain DSM 15229 / JCM 11827 / EJ3), this protein is Digeranylgeranylglycerophospholipid reductase.